Consider the following 849-residue polypeptide: Probable ubiquitin carboxyl-terminal hydrolase 1 (849 aa).

The region spanning 20-120 (QPASLPFQDS…EGLAIERKVL (101 aa)) is the DUSP domain. Positions 279–848 (CGLYNLGNSC…SAYVLFYRAK (570 aa)) constitute a USP domain. Cysteine 288 (nucleophile) is an active-site residue. Residue histidine 806 is the Proton acceptor of the active site.

Belongs to the peptidase C19 family.

It catalyses the reaction Thiol-dependent hydrolysis of ester, thioester, amide, peptide and isopeptide bonds formed by the C-terminal Gly of ubiquitin (a 76-residue protein attached to proteins as an intracellular targeting signal).. The chain is Probable ubiquitin carboxyl-terminal hydrolase 1 (ubp1) from Schizosaccharomyces pombe (strain 972 / ATCC 24843) (Fission yeast).